We begin with the raw amino-acid sequence, 316 residues long: Pantothenate kinase (316 aa).

95-102 (GSVAVGKS) lines the ATP pocket.

The protein belongs to the prokaryotic pantothenate kinase family.

It is found in the cytoplasm. The catalysed reaction is (R)-pantothenate + ATP = (R)-4'-phosphopantothenate + ADP + H(+). Its pathway is cofactor biosynthesis; coenzyme A biosynthesis; CoA from (R)-pantothenate: step 1/5. This is Pantothenate kinase from Klebsiella pneumoniae subsp. pneumoniae (strain ATCC 700721 / MGH 78578).